A 398-amino-acid chain; its full sequence is MALKLNPLASQPYNFPSSARPPISTFRSPKFLCLASSSPALSSKEVESLKKPFTPPKEVHVQVLHSMPPQKIEIFKSMEDWAEQNLLTQLKDVEKSWQPQDFLPDPASDGFEDQVRELRERARELPDDYFVVLVGDMITEEALPTYQTMLNTLDGVRDETGASPTSWAIWTRAWTAEENRHGDLLNKYLYLSGRVDMRQIEKTIQYLIGSGMDPRTENNPYLGFIYTSFQERATFISHGNTARQAKEHGDLKLAQICGTIAADEKRHETAYTKIVEKLFEIDPDGTVMAFADMMRKKISMPAHLMYDGRDESLFDNFSSVAQRLGVYTAKDYADILEFLVGRWKIESLTGLSGEGNKAQEYLCGLTPRIRRLDERAQARAKKGPKVPFSWIHDREVQL.

The transit peptide at 1–34 (MALKLNPLASQPYNFPSSARPPISTFRSPKFLCL) directs the protein to the chloroplast. 6 residues coordinate Fe cation: Glu-140, Glu-178, His-181, Glu-231, Glu-264, and His-267.

This sequence belongs to the fatty acid desaturase type 2 family. Homodimer. It depends on Fe(2+) as a cofactor.

Its subcellular location is the plastid. It is found in the chloroplast. The catalysed reaction is octadecanoyl-[ACP] + 2 reduced [2Fe-2S]-[ferredoxin] + O2 + 2 H(+) = (9Z)-octadecenoyl-[ACP] + 2 oxidized [2Fe-2S]-[ferredoxin] + 2 H2O. The protein operates within lipid metabolism; fatty acid metabolism. Converts stearoyl-ACP to oleoyl-ACP by introduction of a cis double bond between carbons 9 and 10 of the acyl chain. The protein is Stearoyl-[acyl-carrier-protein] 9-desaturase, chloroplastic of Brassica napus (Rape).